Reading from the N-terminus, the 254-residue chain is Glycerol operon regulatory protein (254 aa).

Positions 5-67 (IQSLERAAAM…PASGRYQLGA (63 aa)) constitute an HTH iclR-type domain. The H-T-H motif DNA-binding region spans 27–46 (LSDIASTLGLAKGTAHGILR). The IclR-ED domain occupies 82 to 251 (LRARALVWTD…AAAVSRDLGA (170 aa)).

Functionally, may be an activator protein for the gylABX operon. In Streptomyces griseus, this protein is Glycerol operon regulatory protein (gylR).